A 215-amino-acid chain; its full sequence is 3-dehydroquinate dehydratase (215 aa).

3-dehydroquinate contacts are provided by residues 30–32 and Arg-62; that span reads EVR. The Proton donor/acceptor role is filled by His-114. Lys-140 (schiff-base intermediate with substrate) is an active-site residue. 2 residues coordinate 3-dehydroquinate: Arg-178 and Gln-201.

The protein belongs to the type-I 3-dehydroquinase family. In terms of assembly, homodimer.

It carries out the reaction 3-dehydroquinate = 3-dehydroshikimate + H2O. It functions in the pathway metabolic intermediate biosynthesis; chorismate biosynthesis; chorismate from D-erythrose 4-phosphate and phosphoenolpyruvate: step 3/7. In terms of biological role, involved in the third step of the chorismate pathway, which leads to the biosynthesis of aromatic amino acids. Catalyzes the cis-dehydration of 3-dehydroquinate (DHQ) and introduces the first double bond of the aromatic ring to yield 3-dehydroshikimate. The polypeptide is 3-dehydroquinate dehydratase (Methanopyrus kandleri (strain AV19 / DSM 6324 / JCM 9639 / NBRC 100938)).